Consider the following 78-residue polypeptide: Putative protein PeaD (78 aa).

It belongs to the phage P protein family.

The sequence is that of Putative protein PeaD (peaD) from Escherichia coli (strain K12).